The sequence spans 185 residues: Orotate phosphoribosyltransferase (185 aa).

5-phospho-alpha-D-ribose 1-diphosphate-binding positions include R98, K99, K102, H104, and 128-136 (EDVTTTGGS). Orotate-binding residues include T132 and R160.

It belongs to the purine/pyrimidine phosphoribosyltransferase family. PyrE subfamily. As to quaternary structure, homodimer. Mg(2+) is required as a cofactor.

It catalyses the reaction orotidine 5'-phosphate + diphosphate = orotate + 5-phospho-alpha-D-ribose 1-diphosphate. It participates in pyrimidine metabolism; UMP biosynthesis via de novo pathway; UMP from orotate: step 1/2. Catalyzes the transfer of a ribosyl phosphate group from 5-phosphoribose 1-diphosphate to orotate, leading to the formation of orotidine monophosphate (OMP). This is Orotate phosphoribosyltransferase from Bradyrhizobium sp. (strain BTAi1 / ATCC BAA-1182).